The chain runs to 379 residues: Tubby-like F-box protein 7 (379 aa).

Polar residues predominate over residues 18–28; that stretch reads FHQGETTTAPE. A disordered region spans residues 18-41; sequence FHQGETTTAPESESIPPPSNMAGS. One can recognise an F-box domain in the interval 42–97; the sequence is SSWSAMLPELLGEIIRRVEETEDRWPQRRDVVTCACVSKKWREITHDFARSSLNSG. Disordered stretches follow at residues 193 to 212 and 248 to 278; these read SQPP…RRFA and TLRC…IMKK.

Belongs to the TUB family. In terms of tissue distribution, ubiquitous.

This Arabidopsis thaliana (Mouse-ear cress) protein is Tubby-like F-box protein 7.